Reading from the N-terminus, the 145-residue chain is MLKEFKEFAIRGNVIDLAIGIIIGGAFGKIVDSLVKDVIMPPVGMIMGKMDFASLFLNLSGTEYATLAEAKKAGAATLNYGIFISTIVDFLIMAFVVFLMVKQINRMKKEAPAPVAASDSKDCPFCLSPIPLQATRCPHCTSNLK.

2 helical membrane passes run 14-34 (VIDL…VDSL) and 81-101 (GIFI…FLMV).

Belongs to the MscL family. Homopentamer.

The protein localises to the cell inner membrane. Its function is as follows. Channel that opens in response to stretch forces in the membrane lipid bilayer. May participate in the regulation of osmotic pressure changes within the cell. The polypeptide is Large-conductance mechanosensitive channel (Pelobacter propionicus (strain DSM 2379 / NBRC 103807 / OttBd1)).